Reading from the N-terminus, the 819-residue chain is Myosin light chain kinase 3 (819 aa).

Disordered regions lie at residues 146–256 (VPWR…TPSE), 273–334 (VVSP…TPPR), and 347–462 (EMLM…EQDC). Ser-152 is modified (phosphoserine). Basic and acidic residues-rich tracts occupy residues 158–170 (EENK…EGGK) and 183–196 (DARE…KADV). Positions 307-318 (GPGPQCPGPPGL) are enriched in pro residues. 3 positions are modified to phosphoserine: Ser-355, Ser-401, and Ser-408. The Protein kinase domain occupies 515 to 770 (VCQHEVLGGG…ATQCLKHEWL (256 aa)). Residues 521-529 (LGGGRFGQV) and Lys-544 each bind ATP. Asp-636 acts as the Proton acceptor in catalysis.

The protein belongs to the protein kinase superfamily. CAMK Ser/Thr protein kinase family. It depends on Mg(2+) as a cofactor. Phosphorylated on serine residues. As to expression, restricted to heart.

Its subcellular location is the cytoplasm. It catalyses the reaction L-seryl-[myosin light chain] + ATP = O-phospho-L-seryl-[myosin light chain] + ADP + H(+). The enzyme catalyses L-threonyl-[myosin light chain] + ATP = O-phospho-L-threonyl-[myosin light chain] + ADP + H(+). Its function is as follows. Kinase that phosphorylates MYL2 in vitro. Promotes sarcomere formation in cardiomyocytes and increases cardiomyocyte contractility. The protein is Myosin light chain kinase 3 (MYLK3) of Homo sapiens (Human).